Reading from the N-terminus, the 83-residue chain is Large ribosomal subunit protein bL31B (83 aa).

Belongs to the bacterial ribosomal protein bL31 family. Type B subfamily. As to quaternary structure, part of the 50S ribosomal subunit.

This chain is Large ribosomal subunit protein bL31B, found in Lactobacillus gasseri (strain ATCC 33323 / DSM 20243 / BCRC 14619 / CIP 102991 / JCM 1131 / KCTC 3163 / NCIMB 11718 / NCTC 13722 / AM63).